The primary structure comprises 704 residues: MAISKIAFLALIALSGLCGLASATYKVGVGRADITGPPVEINFMGYANIKQVGRGIHTRVFARAFVVEDEKGNRVAFVSADAGMMGYGLKREVIKRLQARYGNLYHTDNVAISGTHTHGAPGGFLMHLLYDISILGFVPQTFEVMAQGLYLCIKRATDNLVDGRIFLSKTTVLNVNINRSPTSYLRNPEEERAQYEHDTDKTLTQLRFVDLENNLLGAFNWYAVHATSMNNTNRLVTSDNVGYAALLLEKEYNPNKMPGKGKFVGAFCSSNLGDVSPNIMGPKCSISGNECDLLTSRCPAGEGECFASGPGRDMVESTQILGQRLADAALGLLNEQSQESTAREVTGDVRFIHQFVDMPNYNGSAYNPLSRKIDKIRGCQPAMGYSFAAGTTDGPGAFSFEQGTTTDNPMWNFVRDFIATPTQEDIKCHEPKPILLATGRATFPYEWQPKIVSDQLLKIGDVIIAAVPCEFTTMAGRRLRNQIRAAASAAGGLDTEVIIAGLTNIYTSYTVTPEEYQAQRYEAASTIFGPHTHSIYMDVFERLTKALMRNETVEPGPSPPYMNDVMLSLNTGVLFDGHPINTDFGYVKTQPEKEYGINDTVKVTYISGNPRNNLFTEKTYFTVERKINEDRWKVAYTDASWETKMIWHRTNTILGFSDLEIYWNISPQTLPGVYRIRHSGEYKYILGGKYPYEGLSHSFTVKED.

An N-terminal signal peptide occupies residues 1–23; it reads MAISKIAFLALIALSGLCGLASA. An N-linked (GlcNAc...) asparagine glycan is attached at Asn-230. The Nucleophile role is filled by Ser-276. N-linked (GlcNAc...) asparagine glycosylation is found at Asn-362, Asn-550, and Asn-598.

The protein belongs to the neutral ceramidase family. N-glycosylated.

The protein resides in the secreted. The enzyme catalyses an N-acylsphing-4-enine + H2O = sphing-4-enine + a fatty acid. Hydrolyzes the sphingolipid ceramide into sphingosine and free fatty acid at an optimal pH of 6.5-7.5. Acts as a key regulator of sphingolipid signaling metabolites by generating sphingosine at the cell surface. The chain is Neutral ceramidase (CDase) from Drosophila pseudoobscura pseudoobscura (Fruit fly).